Reading from the N-terminus, the 143-residue chain is WW domain-containing protein C660.05 (143 aa).

The region spanning 9–44 (GLPAGWVAQWDPTYQAYFYINETFEGAQPQWEPPIP) is the WW domain. The segment at 115 to 143 (HHGPLHGPHGGFGGRGGGRMGGRGGRGRR) is disordered.

The sequence is that of WW domain-containing protein C660.05 from Schizosaccharomyces pombe (strain 972 / ATCC 24843) (Fission yeast).